A 104-amino-acid polypeptide reads, in one-letter code: uncharacterized protein (104 aa).

Residues 77 to 98 (IAAVRANIIICACFFYLFCYCS) form a helical membrane-spanning segment.

It localises to the membrane. This is an uncharacterized protein from Saccharomyces cerevisiae (strain ATCC 204508 / S288c) (Baker's yeast).